The sequence spans 164 residues: UPF0478 protein SSP1024 (164 aa).

Residues 7-27 (IAGIIAAVAFLILVIGIVVVL) traverse the membrane as a helical segment. The tract at residues 136 to 164 (RNRRDSANYKTSSVANETNHSYTTRVDNK) is disordered. The span at 143–164 (NYKTSSVANETNHSYTTRVDNK) shows a compositional bias: polar residues.

This sequence belongs to the UPF0478 family.

The protein resides in the cell membrane. This chain is UPF0478 protein SSP1024, found in Staphylococcus saprophyticus subsp. saprophyticus (strain ATCC 15305 / DSM 20229 / NCIMB 8711 / NCTC 7292 / S-41).